Reading from the N-terminus, the 34-residue chain is Photosystem II reaction center protein T (34 aa).

Residues 3-23 form a helical membrane-spanning segment; the sequence is ALVYTFLLVSTLGIIFFAIFF.

It belongs to the PsbT family. In terms of assembly, PSII is composed of 1 copy each of membrane proteins PsbA, PsbB, PsbC, PsbD, PsbE, PsbF, PsbH, PsbI, PsbJ, PsbK, PsbL, PsbM, PsbT, PsbY, PsbZ, Psb30/Ycf12, at least 3 peripheral proteins of the oxygen-evolving complex and a large number of cofactors. It forms dimeric complexes.

Its subcellular location is the plastid. It is found in the chloroplast thylakoid membrane. Found at the monomer-monomer interface of the photosystem II (PS II) dimer, plays a role in assembly and dimerization of PSII. PSII is a light-driven water plastoquinone oxidoreductase, using light energy to abstract electrons from H(2)O, generating a proton gradient subsequently used for ATP formation. This is Photosystem II reaction center protein T from Solanum bulbocastanum (Wild potato).